The sequence spans 168 residues: Photosystem I assembly protein Ycf3 (168 aa).

TPR repeat units follow at residues 35–68, 72–105, and 120–153; these read AFTY…EIDP, SYIL…NPFL, and GEQA…TPGN.

Belongs to the Ycf3 family.

The protein localises to the plastid. Its subcellular location is the chloroplast thylakoid membrane. Functionally, essential for the assembly of the photosystem I (PSI) complex. May act as a chaperone-like factor to guide the assembly of the PSI subunits. This Liriodendron tulipifera (Tuliptree) protein is Photosystem I assembly protein Ycf3.